Here is a 420-residue protein sequence, read N- to C-terminus: Exodeoxyribonuclease 7 large subunit (420 aa).

It belongs to the XseA family. Heterooligomer composed of large and small subunits.

Its subcellular location is the cytoplasm. It catalyses the reaction Exonucleolytic cleavage in either 5'- to 3'- or 3'- to 5'-direction to yield nucleoside 5'-phosphates.. Its function is as follows. Bidirectionally degrades single-stranded DNA into large acid-insoluble oligonucleotides, which are then degraded further into small acid-soluble oligonucleotides. This is Exodeoxyribonuclease 7 large subunit from Helicobacter pylori (strain G27).